Consider the following 136-residue polypeptide: Beta-hordothionin (136 aa).

Positions 1–27 (MGSKGLKGVMVCLLILGLVLEHVQVEG) are cleaved as a signal peptide. Intrachain disulfides connect cysteine 30–cysteine 66, cysteine 31–cysteine 58, cysteine 39–cysteine 56, and cysteine 43–cysteine 52. A propeptide spans 73 to 136 (LALVSNSDEP…GDVGLTSLTA (64 aa)) (acidic domain).

The protein belongs to the plant thionin (TC 1.C.44) family. 4 C-C subfamily. Homodimer.

It localises to the secreted. Thionins are small plant proteins which are toxic to animal cells. They seem to exert their toxic effect at the level of the cell membrane. Their precise function is not known. This is Beta-hordothionin (THI1.2) from Hordeum vulgare (Barley).